Consider the following 71-residue polypeptide: Beta-defensin 25 (71 aa).

The signal sequence occupies residues 1–22 (MAKWILLIVALLVLGHVPSGST). Intrachain disulfides connect C27–C54, C34–C48, and C38–C55.

The protein belongs to the beta-defensin family.

The protein resides in the secreted. Functionally, has antibacterial activity. The chain is Beta-defensin 25 (Defb25) from Rattus norvegicus (Rat).